Here is a 197-residue protein sequence, read N- to C-terminus: Holliday junction branch migration complex subunit RuvA (197 aa).

The segment at 1-62 (MIEFVRGEVA…EDQEVLFGFR (62 aa)) is domain I. A domain II region spans residues 63–141 (SRRERALFTK…ELAPDYIPSE (79 aa)). Residues 141–145 (EGLFA) are flexible linker. Residues 146-197 (QGNAELNEACEALTALGYSEREVEKVKKALQGEVLSTDQYVKRALQLLLNVR) form a domain III region.

It belongs to the RuvA family. In terms of assembly, homotetramer. Forms an RuvA(8)-RuvB(12)-Holliday junction (HJ) complex. HJ DNA is sandwiched between 2 RuvA tetramers; dsDNA enters through RuvA and exits via RuvB. An RuvB hexamer assembles on each DNA strand where it exits the tetramer. Each RuvB hexamer is contacted by two RuvA subunits (via domain III) on 2 adjacent RuvB subunits; this complex drives branch migration. In the full resolvosome a probable DNA-RuvA(4)-RuvB(12)-RuvC(2) complex forms which resolves the HJ.

Its subcellular location is the cytoplasm. In terms of biological role, the RuvA-RuvB-RuvC complex processes Holliday junction (HJ) DNA during genetic recombination and DNA repair, while the RuvA-RuvB complex plays an important role in the rescue of blocked DNA replication forks via replication fork reversal (RFR). RuvA specifically binds to HJ cruciform DNA, conferring on it an open structure. The RuvB hexamer acts as an ATP-dependent pump, pulling dsDNA into and through the RuvAB complex. HJ branch migration allows RuvC to scan DNA until it finds its consensus sequence, where it cleaves and resolves the cruciform DNA. The sequence is that of Holliday junction branch migration complex subunit RuvA from Exiguobacterium sibiricum (strain DSM 17290 / CCUG 55495 / CIP 109462 / JCM 13490 / 255-15).